The primary structure comprises 407 residues: 1-deoxy-D-xylulose 5-phosphate reductoisomerase (407 aa).

Residues T25, G26, S27, I28, N53, and N136 each coordinate NADPH. K137 contributes to the 1-deoxy-D-xylulose 5-phosphate binding site. An NADPH-binding site is contributed by E138. D162 is a Mn(2+) binding site. Positions 163, 164, 188, and 211 each coordinate 1-deoxy-D-xylulose 5-phosphate. E164 is a binding site for Mn(2+). G217 serves as a coordination point for NADPH. 1-deoxy-D-xylulose 5-phosphate contacts are provided by S224, N229, K230, and E233. A Mn(2+)-binding site is contributed by E233.

It belongs to the DXR family. It depends on Mg(2+) as a cofactor. Mn(2+) is required as a cofactor.

It catalyses the reaction 2-C-methyl-D-erythritol 4-phosphate + NADP(+) = 1-deoxy-D-xylulose 5-phosphate + NADPH + H(+). It functions in the pathway isoprenoid biosynthesis; isopentenyl diphosphate biosynthesis via DXP pathway; isopentenyl diphosphate from 1-deoxy-D-xylulose 5-phosphate: step 1/6. In terms of biological role, catalyzes the NADPH-dependent rearrangement and reduction of 1-deoxy-D-xylulose-5-phosphate (DXP) to 2-C-methyl-D-erythritol 4-phosphate (MEP). This is 1-deoxy-D-xylulose 5-phosphate reductoisomerase from Bradyrhizobium diazoefficiens (strain JCM 10833 / BCRC 13528 / IAM 13628 / NBRC 14792 / USDA 110).